The sequence spans 86 residues: U18-theraphotoxin-Cg1a (86 aa).

Positions 1–20 (KASVLITLAVLGVMFVWTSA) are cleaved as a signal peptide. The propeptide occupies 21–49 (AELEERGSDQRDSPALIKSMAKVFQSEER). Intrachain disulfides connect Cys51/Cys65, Cys58/Cys70, and Cys64/Cys78. A Phenylalanine amide modification is found at Phe84.

The protein belongs to the neurotoxin 10 (Hwtx-1) family. 47 subfamily. Expressed by the venom gland.

The protein localises to the secreted. In terms of biological role, inhibits TTX-sensitive and TTX-insensitive sodium currents (IC(50) is 0.6 uM and 0.95 uM respectively) on rat dorsal root ganglion (DRG) neurons. Inhibits muscular subtypes sodium channels Nav1.4/SCN4A and Nav1.5/SCN5A transiently transfected in to HEK293 cells (IC(50) is 5.42 uM and 0.45 uM respectively). Also blocks Kv2.1/KCNB1 potassium channels expressed in X.laevis oocytes with an IC(50) of 604 nM. Injection of the toxin in mice was immediately followed by general ataxia, lack of response to stimuli and semiparalysis. The protein is U18-theraphotoxin-Cg1a of Chilobrachys guangxiensis (Chinese earth tiger tarantula).